The chain runs to 208 residues: Probable splicing factor, arginine/serine-rich 5 (208 aa).

The RRM domain maps to 2 to 74 (PRLYLGKIPY…MRLVVEMARG (73 aa)). The disordered stretch occupies residues 71–208 (MARGKPRGND…RSPSPGSPKD (138 aa)). Basic residues predominate over residues 84 to 123 (SRSPRRRSRSPRRRSRTPPRRRSRSRDRKRSRRSRSRSSS). Residues 128 to 153 (PVRESRRRSESRSPSPKRDLKREASR) are compositionally biased toward basic and acidic residues.

The protein belongs to the splicing factor SR family. Extensively phosphorylated on serine residues in the RS domain.

It localises to the nucleus. Its function is as follows. Plays a functionally redundant role in shifting germ cell sexual differentiation in hermaphrodites. The protein is Probable splicing factor, arginine/serine-rich 5 (rsp-5) of Caenorhabditis elegans.